Reading from the N-terminus, the 282-residue chain is Para-Rep C2 (282 aa).

Residues 1 to 99 (MASKRWCFTL…ETLIAEIGAP (99 aa)) enclose the CRESS-DNA virus Rep endonuclease domain. The RCR-1 signature appears at 7–10 (CFTL). Residues Glu38 and His47 each contribute to the a divalent metal cation site. Residues 47 to 49 (HLQ) carry the RCR-2 motif. The Nuclear localization signal motif lies at 56-77 (KLIRLGGLKKKFGSIAHWEIAK). The active-site For DNA cleavage activity is the Tyr86. The RCR-3 motif lies at 86-89 (YCTK). The Nuclear localization signal signature appears at 99–105 (PVKKGSN). Position 174–182 (174–182 (GPDGGEGKS)) interacts with ATP.

It belongs to the nanoviridea/circoviridae replication-associated protein family. In terms of assembly, homooligomer (Potential). Rep binds to repeated DNA motifs (iterons). The cofactor is Mg(2+). Mn(2+) serves as cofactor.

The protein localises to the host nucleus. It catalyses the reaction ATP + H2O = ADP + phosphate + H(+). Functionally, initiates and terminates the replication only of its own subviral DNA molecule. The closed circular ssDNA genome is first converted to a superhelical dsDNA. Rep binds a specific hairpin at the genome origin of replication. Introduces an endonucleolytic nick within the intergenic region of the genome, thereby initiating the rolling circle replication (RCR). Following cleavage, binds covalently to the 5'-phosphate of DNA as a tyrosyl ester. The cleavage gives rise to a free 3'-OH that serves as a primer for the cellular DNA polymerase. The polymerase synthesizes the (+) strand DNA by rolling circle mechanism. After one round of replication, a Rep-catalyzed nucleotidyl transfer reaction releases a circular single-stranded virus genome, thereby terminating the replication. Displays origin-specific DNA cleavage, nucleotidyl transferase, ATPase and helicase activities. The chain is Para-Rep C2 (C2) from Milk vetch dwarf C2 alphasatellite (MVDC2A).